The following is a 225-amino-acid chain: Glutathione S-transferase A (225 aa).

Residues 3 to 85 enclose the GST N-terminal domain; that stretch reads KDMTLLWGSG…YLESQFKSQG (83 aa). Glutathione is bound at residue Arg18. The region spanning 92–217 is the GST C-terminal domain; the sequence is CPAEQAMMYQ…WPPTWLESPQ (126 aa).

Belongs to the GST superfamily. Theta family. As to quaternary structure, homodimer. Found in all the tissues examined. Highest values found in liver and in intestinal mucosa.

The protein localises to the cytoplasm. It catalyses the reaction RX + glutathione = an S-substituted glutathione + a halide anion + H(+). Its function is as follows. Conjugation of reduced glutathione to a wide number of exogenous and endogenous hydrophobic electrophiles. The polypeptide is Glutathione S-transferase A (Pleuronectes platessa (European plaice)).